The chain runs to 63 residues: Disintegrin schistatin-like subunit B (63 aa).

Residues 1 to 63 (NSVNPCCDPQ…TPDCPRNRYN (63 aa)) enclose the Disintegrin domain. Disulfide bonds link C6-C29, C20-C26, C25-C50, and C38-C57. Positions 42–44 (RGD) match the Cell attachment site motif.

Belongs to the disintegrin family. Dimeric disintegrin subfamily. Heterodimer with subunit A; disulfide-linked. In terms of tissue distribution, expressed by the venom gland.

It is found in the secreted. Its function is as follows. May bind to both alpha-IIb/beta-3 (ITGA2B/ITGB3) and alpha-V/beta-3 (ITGAV/ITGB3) integrins, and may inhibit platelet aggregation. The sequence is that of Disintegrin schistatin-like subunit B from Echis carinatus (Saw-scaled viper).